Reading from the N-terminus, the 100-residue chain is Putative pterin-4-alpha-carbinolamine dehydratase (100 aa).

Belongs to the pterin-4-alpha-carbinolamine dehydratase family.

It catalyses the reaction (4aS,6R)-4a-hydroxy-L-erythro-5,6,7,8-tetrahydrobiopterin = (6R)-L-erythro-6,7-dihydrobiopterin + H2O. This chain is Putative pterin-4-alpha-carbinolamine dehydratase, found in Bradyrhizobium sp. (strain ORS 278).